A 319-amino-acid chain; its full sequence is Coproporphyrin III ferrochelatase 2 (319 aa).

Fe-coproporphyrin III is bound by residues Tyr13, Arg30, 46-47 (RY), Ser54, and Tyr125. The Fe(2+) site is built by His181 and Glu262.

The protein belongs to the ferrochelatase family.

The protein localises to the cytoplasm. The enzyme catalyses Fe-coproporphyrin III + 2 H(+) = coproporphyrin III + Fe(2+). It functions in the pathway porphyrin-containing compound metabolism; protoheme biosynthesis. Functionally, involved in coproporphyrin-dependent heme b biosynthesis. Catalyzes the insertion of ferrous iron into coproporphyrin III to form Fe-coproporphyrin III. The polypeptide is Coproporphyrin III ferrochelatase 2 (Bacillus cereus (strain ZK / E33L)).